Consider the following 91-residue polypeptide: Putative transmembrane protein ORF91a (91 aa).

The next 3 membrane-spanning stretches (helical) occupy residues 17 to 37, 40 to 60, and 69 to 89; these read TGIS…VGLA, AFLG…LLFM, and GIGF…YIST.

The protein resides in the host membrane. This chain is Putative transmembrane protein ORF91a, found in Acidianus convivator (ABV).